We begin with the raw amino-acid sequence, 344 residues long: Prickle-like protein 4 (344 aa).

In terms of domain architecture, PET spans 1-81 (MSPQGPAVLS…ARLVLPKLEG (81 aa)). 2 consecutive LIM zinc-binding domains span residues 82–147 (HTCE…LLRP) and 148–207 (RCPA…RYSD). The tract at residues 253-344 (GSSLQTQRGL…NASKTHCTMC (92 aa)) is disordered. A compositionally biased stretch (polar residues) spans 257-271 (QTQRGLPGSSPQQEN). Residues 272–296 (RPGDKAEAPKGQEQCRLETIRDPKD) are compositionally biased toward basic and acidic residues. The span at 322-344 (SWKTPGSLQAEDSNASKTHCTMC) shows a compositional bias: polar residues.

It belongs to the prickle / espinas / testin family. Expressed in a broad range of normal tissues as well as in hepatocellular carcinoma, breast cancer and prostate cancer tissues.

The chain is Prickle-like protein 4 (PRICKLE4) from Homo sapiens (Human).